The following is a 981-amino-acid chain: MTSMMAMGEPRLNWDVSPKNGLKTFFSRENYKDQSMAPSLKELCILSSRRIGENLNASAGSVENEPTVNSAAQAKEKVKTTVGMVLLPKPRVPYPRFSRFSQREQRNYVDLLVKYAKVPPNSKTVGINKNDYLQYLEMKKHVNEEVTEFLKFLQNSAKKCAQDYNMLSDDACLVTEQILKACIEQVKKYPEFYTLHEVTSLMGFFPFRIEMGFKLEKTLLALGSVKYVKTVFPSMPAKLQLSKDTIPAIETPEQIAAAMHYDISEDPNAEKLVARYHPQIALTSQSLFTLLNNHGPSYKEQWEIPVCIQVIPVAGSKPIKVIYINSPLPQKKMTMRERNQIFHEVPLKFMMSKNTSVPVSAVFMDKPEEYISEMDISYEVNECRKIETLENLDLEFDDDVTELETFGATTTKPSKSPSPASTSTVAPMTDTLTAPSIADTSEAPTSPDISAHSRSLSQILMEQLQKEKQLVTGMIDSGPEESKNKDDQRFIPCGEKVSNSDKPLVQDSDLKTSDPLQLESSMEIETSSKNDMATEMESVDERVNVLENTDTNSKEKTVTSEAANTEDVVLDSSDTDEDCLIIDMECQSNSHGKTAEVGSNLSSKPASLNSSSGQTSTGNQTNSTCPEESCVLKKPIKRVYKKFDPVGEILKMQDELLKPISRKIPELPLMNSENSKQPPISEQPSAPSDACSWPKSIWPSAFQKPKGRLPYELQDYVEDTSEYVAPQEGNFVYKLFSLQDLLLLVRCSVQRIETRPRSKKRKKIRRQFPVYVLPKVEYQACYGVEALTESELCRLWTESLLHSNSSFYVGHIDAFTSKLFLLEEITSEELKEKLSALKISSLFNILQHILRKLSSLQEGSYLLSHAAEDSSLLIYKTSDGKVTRTAYNLHKTHCGLPGVPSSLSVPWVPLDPSLLLPNHIHHGRIPCTFPPKSLGPTAQQKIGGTRMPTRSHRNSVSVETKSLPAQQVENEGVASSKRKIT.

2 positions are modified to phosphoserine: Ser17 and Ser326. Disordered regions lie at residues 406–427 (FGAT…TVAP) and 475–516 (IDSG…SDPL). Low complexity predominate over residues 408–424 (ATTTKPSKSPSPASTST). The segment covering 480–489 (EESKNKDDQR) has biased composition (basic and acidic residues). At Ser573 the chain carries Phosphoserine. A Phosphothreonine modification is found at Thr575. Disordered stretches follow at residues 591–627 (HGKT…TCPE), 669–690 (LMNS…PSDA), and 930–981 (PPKS…RKIT). Over residues 599 to 624 (SNLSSKPASLNSSSGQTSTGNQTNST) the composition is skewed to low complexity. Polar residues-rich tracts occupy residues 671–686 (NSEN…QPSA) and 954–969 (NSVS…QQVE).

This sequence belongs to the ICE2 family. In terms of assembly, component of the little elongation complex (LEC), at least composed of ELL (ELL, ELL2 or ELL3), ZC3H8, ICE1 and ICE2. Interacts with ICE1 (via C-terminus domain). Interacts with ELL.

Its subcellular location is the nucleus. Component of the little elongation complex (LEC), a complex required to regulate small nuclear RNA (snRNA) gene transcription by RNA polymerase II and III. The chain is Little elongation complex subunit 2 (ICE2) from Bos taurus (Bovine).